Reading from the N-terminus, the 874-residue chain is Probable inorganic carbon transporter subunit DabA (874 aa).

Zn(2+) contacts are provided by Cys398, Asp400, His580, and Cys595.

The protein belongs to the inorganic carbon transporter (TC 9.A.2) DabA family. Forms a complex with DabB. Requires Zn(2+) as cofactor.

Its subcellular location is the cell membrane. Part of an energy-coupled inorganic carbon pump. The protein is Probable inorganic carbon transporter subunit DabA of Bacillus anthracis (strain A0248).